Reading from the N-terminus, the 183-residue chain is uncharacterized protein (183 aa).

A helical membrane pass occupies residues 153–175 (LLYVFIRLFAGCLKVFRLCILWL).

Its subcellular location is the membrane. This is an uncharacterized protein from Saccharomyces cerevisiae (strain ATCC 204508 / S288c) (Baker's yeast).